The following is a 220-amino-acid chain: Small ribosomal subunit protein eS8 (220 aa).

This sequence belongs to the eukaryotic ribosomal protein eS8 family.

The chain is Small ribosomal subunit protein eS8 (RPS8A) from Leishmania major.